The primary structure comprises 726 residues: MKSPLPWLKRRLSGRADSEHAQNLIRIIITTLFISYLGWRYQHTHGDTLMATWLILVGELLVSLGLMVAILLRPQVSHTRRLIGMLLDYTCTGAIMAIQGEPASPLYAVCMWVTIGNGLRYGSNYLRAATAMGSLCFLGAILISPYWKANPYLSWGLLLGLIAVPLYFDSLLRAMTRAVREARHANQAKSRFLANMSHEFRTPLNGLSGMTEVLATTRLDAEQKECLNTIQASARSLLSLVEEVLDISAIEAGKIRIDRRDFSLREMIGSVNLILQPQARGRRLEYGTQVADDVPDLLKGDTAHLRQVLLNLVGNAVKFTEHGHVLLRVTRVSGSAEDAVRLRFDVEDTGIGVPMDMRPRLFEAFEQADVGLSRRYEGTGLGTTIAKGLVEAMGGSIGFKENQPSGSVFWFELPMAIGEPLKSSTVRVPTGALVDAPEELESSNIIAFSNPFLRHRARVRSMRMLVADDHEANRMVLQRLLEKAGHKVLCVNGAEQVLDAMAEEDYDAVIVDLHMPGMNGLDMLKQLRVMQASGMRYTPVVVLSADVTPEAIRACEQAGARAFLAKPVLAAKLLDTLADLAVSTRQLATPATTVQVATSFEGVLDSSVLDELAALGMGEEFERQFVRQCLDDAQNCVGDIERDGTCSDWEQLRESAHALRGVASNLGLAQVASSGGELMRMADWQLQAEWRLRLSTLREQLKAGKDALDARVQGVKDGECSPRSNE.

At 1–22 (MKSPLPWLKRRLSGRADSEHAQ) the chain is on the periplasmic side. Positions 1 to 22 (MKSPLPWLKRRLSGRADSEHAQ) are sensor. A helical membrane pass occupies residues 23–40 (NLIRIIITTLFISYLGWR). At 41–51 (YQHTHGDTLMA) the chain is on the cytoplasmic side. A helical transmembrane segment spans residues 52 to 72 (TWLILVGELLVSLGLMVAILL). Residues 73–94 (RPQVSHTRRLIGMLLDYTCTGA) are Periplasmic-facing. The chain crosses the membrane as a helical span at residues 95-115 (IMAIQGEPASPLYAVCMWVTI). Residues 116-127 (GNGLRYGSNYLR) are Cytoplasmic-facing. The chain crosses the membrane as a helical span at residues 128 to 148 (AATAMGSLCFLGAILISPYWK). Residues 149-151 (ANP) lie on the Periplasmic side of the membrane. Residues 152–172 (YLSWGLLLGLIAVPLYFDSLL) traverse the membrane as a helical segment. Residues 173–726 (RAMTRAVREA…DGECSPRSNE (554 aa)) are Cytoplasmic-facing. The region spanning 195 to 417 (NMSHEFRTPL…VFWFELPMAI (223 aa)) is the Histidine kinase domain. H198 bears the Phosphohistidine; by autocatalysis mark. One can recognise a Response regulatory domain in the interval 463-581 (RMLVADDHEA…KLLDTLADLA (119 aa)). D512 carries the 4-aspartylphosphate modification. Positions 618 to 711 (GEEFERQFVR…KAGKDALDAR (94 aa)) constitute an HPt domain. Position 657 is a phosphohistidine (H657).

In terms of assembly, at low DSF concentrations, interacts with RpfF. Post-translationally, autophosphorylated. Activation may require a sequential transfer of a phosphate group from a His in the primary transmitter domain, to an Asp in the receiver domain and to a His in the secondary transmitter domain.

The protein localises to the cell inner membrane. The enzyme catalyses ATP + protein L-histidine = ADP + protein N-phospho-L-histidine.. With respect to regulation, binding of DSF to the sensor region causes allosteric change, which facilitates RpfC autophosphorylation. Functionally, hybrid sensor kinase that regulates diverse biological functions through two distinct molecular mechanisms. At low cell density, the extracellular concentration of the diffusible signaling factor (DSF) is below a threshold, and unphosphorylated RpfC is involved in the negative regulation of DSF synthesis, via direct interaction with the DSF synthase RpfF. Interaction prevents synthesis of DSF, which remains at a basal level. This activity does not involve the phosphorelay mechanism and is not dependent on RpfG. Is also member of the two-component regulatory system RpfG/RpfC, which is involved in the perception and response to DSF, which is essential for cell-cell signaling. At high cell density, the level of extracellular DSF increases and binding of DSF to the sensor region of RpfC causes autophosphorylation of RpfC, which results in the release of RpfF and the activation of RpfG via a four-step phosphorelay. Activation of RpfG leads to the positive regulation of biofilm dispersal and the production of virulence factors. The polypeptide is Sensory/regulatory protein RpfC (rpfC) (Xanthomonas campestris pv. campestris (strain 8004)).